We begin with the raw amino-acid sequence, 115 residues long: Insulin-like peptide IlO1_i1 (115 aa).

The N-terminal stretch at 1–20 (MFVYTTIMLLLLAEINHSQG) is a signal peptide. Cystine bridges form between Cys40-Cys101, Cys52-Cys114, and Cys100-Cys105. Residues 59–93 (RRNRITGLDQRSIFESNLLAKRFLISRRQIVNNRR) constitute a propeptide, c peptide.

The protein belongs to the insulin family. Expressed in tentacles.

The protein resides in the secreted. In terms of biological role, heterodimer with unknown function. Surprisingly, the truncated synthetic analog (dimer of 27-58 and 94-115) does not bind to long insulin receptor (HIR-B) and insulin-like growth factor 1 receptor. This truncated synthetic analog shows very weak inhibitory activity on different voltage-gated channels. In Oulactis sp. (Sea anemone), this protein is Insulin-like peptide IlO1_i1.